A 113-amino-acid polypeptide reads, in one-letter code: MSGHQRTRSRSRERRDDQDSNHPVGAVVAQELPSNDQLQQEEPPIESQDYTPGQERDEGALDFQVLGLAAYLWELTRSKTGGERGDGPNVKGEFLPNLEPVKIPEAGEGQPSV.

The segment covering 1–12 (MSGHQRTRSRSR) has biased composition (basic residues). Disordered stretches follow at residues 1–61 (MSGH…EGAL) and 78–113 (SKTG…QPSV).

It belongs to the GAGE family.

This chain is P antigen family member 3 (PAGE3), found in Homo sapiens (Human).